We begin with the raw amino-acid sequence, 320 residues long: 3-hydroxybenzoate 6-hydroxylase 2 (320 aa).

Residues 1–25 (MRSTNTRSARSRPTKRSVNASATPT) are disordered. The span at 16–25 (RSVNASATPT) shows a compositional bias: polar residues.

The protein belongs to the 3-hydroxybenzoate 6-hydroxylase family. Requires FAD as cofactor.

The catalysed reaction is 3-hydroxybenzoate + NADH + O2 + H(+) = 2,5-dihydroxybenzoate + NAD(+) + H2O. In terms of biological role, catalyzes the conversion of 3-hydroxybenzoate to gentisate. This is 3-hydroxybenzoate 6-hydroxylase 2 (hbzD) from Aquipseudomonas alcaligenes (Pseudomonas alcaligenes).